The sequence spans 345 residues: Holliday junction branch migration complex subunit RuvB (345 aa).

The tract at residues 4-185 (LDNRFVTPLS…FGVLCPMEFY (182 aa)) is large ATPase domain (RuvB-L). ATP-binding positions include L24, R25, G66, K69, T70, T71, 132–134 (EDY), R175, Y185, and R222. T70 serves as a coordination point for Mg(2+). Residues 186–256 (NEEELKDIIV…MTNKALNLLE (71 aa)) form a small ATPAse domain (RuvB-S) region. The head domain (RuvB-H) stretch occupies residues 259–345 (KEGFDSIDTK…ENINQYKFKI (87 aa)). The DNA site is built by R314 and R319.

It belongs to the RuvB family. As to quaternary structure, homohexamer. Forms an RuvA(8)-RuvB(12)-Holliday junction (HJ) complex. HJ DNA is sandwiched between 2 RuvA tetramers; dsDNA enters through RuvA and exits via RuvB. An RuvB hexamer assembles on each DNA strand where it exits the tetramer. Each RuvB hexamer is contacted by two RuvA subunits (via domain III) on 2 adjacent RuvB subunits; this complex drives branch migration. In the full resolvosome a probable DNA-RuvA(4)-RuvB(12)-RuvC(2) complex forms which resolves the HJ.

Its subcellular location is the cytoplasm. It catalyses the reaction ATP + H2O = ADP + phosphate + H(+). In terms of biological role, the RuvA-RuvB-RuvC complex processes Holliday junction (HJ) DNA during genetic recombination and DNA repair, while the RuvA-RuvB complex plays an important role in the rescue of blocked DNA replication forks via replication fork reversal (RFR). RuvA specifically binds to HJ cruciform DNA, conferring on it an open structure. The RuvB hexamer acts as an ATP-dependent pump, pulling dsDNA into and through the RuvAB complex. RuvB forms 2 homohexamers on either side of HJ DNA bound by 1 or 2 RuvA tetramers; 4 subunits per hexamer contact DNA at a time. Coordinated motions by a converter formed by DNA-disengaged RuvB subunits stimulates ATP hydrolysis and nucleotide exchange. Immobilization of the converter enables RuvB to convert the ATP-contained energy into a lever motion, pulling 2 nucleotides of DNA out of the RuvA tetramer per ATP hydrolyzed, thus driving DNA branch migration. The RuvB motors rotate together with the DNA substrate, which together with the progressing nucleotide cycle form the mechanistic basis for DNA recombination by continuous HJ branch migration. Branch migration allows RuvC to scan DNA until it finds its consensus sequence, where it cleaves and resolves cruciform DNA. This Clostridium tetani (strain Massachusetts / E88) protein is Holliday junction branch migration complex subunit RuvB.